The chain runs to 98 residues: NADH-ubiquinone oxidoreductase chain 4L (98 aa).

The next 3 helical transmembrane spans lie at 1–21, 29–49, and 58–78; these read MPLI…GMLV, SLLC…LMTL, and IVPI…LALL.

Belongs to the complex I subunit 4L family. Core subunit of respiratory chain NADH dehydrogenase (Complex I) which is composed of 45 different subunits.

The protein localises to the mitochondrion inner membrane. The enzyme catalyses a ubiquinone + NADH + 5 H(+)(in) = a ubiquinol + NAD(+) + 4 H(+)(out). In terms of biological role, core subunit of the mitochondrial membrane respiratory chain NADH dehydrogenase (Complex I) which catalyzes electron transfer from NADH through the respiratory chain, using ubiquinone as an electron acceptor. Part of the enzyme membrane arm which is embedded in the lipid bilayer and involved in proton translocation. This is NADH-ubiquinone oxidoreductase chain 4L (MT-ND4L) from Pan paniscus (Pygmy chimpanzee).